A 456-amino-acid chain; its full sequence is Probable hexose phosphate transport protein (456 aa).

A run of 11 helical transmembrane segments spans residues 34 to 54 (IFYS…SFTF), 70 to 90 (LGII…VSGV), 113 to 133 (IFFG…INGW), 161 to 181 (VWST…GIAI), 185 to 205 (GWRG…FILI), 257 to 277 (YVLS…IYVV), 302 to 322 (LCVS…GWLS), 331 to 351 (GPMN…LWGT), 362 to 382 (AFLF…GLAA), 394 to 414 (ASGF…YPLG), and 421 to 441 (GWHG…LFFL).

This sequence belongs to the major facilitator superfamily. Organophosphate:Pi antiporter (OPA) (TC 2.A.1.4) family.

It localises to the cell membrane. Transport protein for sugar phosphate uptake. In Chlamydia muridarum (strain MoPn / Nigg), this protein is Probable hexose phosphate transport protein.